An 88-amino-acid polypeptide reads, in one-letter code: Small ribosomal subunit protein bS20 (88 aa).

Disordered stretches follow at residues 1–22 (MPNIKSAIKRVKTNEKRRAQNA) and 69–88 (KNAASRQKSRLAKKLNGLSA).

It belongs to the bacterial ribosomal protein bS20 family.

Functionally, binds directly to 16S ribosomal RNA. This is Small ribosomal subunit protein bS20 from Shouchella clausii (strain KSM-K16) (Alkalihalobacillus clausii).